Consider the following 429-residue polypeptide: Palmitoyltransferase ZDHHC23 (429 aa).

Topologically, residues 1 to 81 (MKPVKKKKTE…RIPWLRGAKK (81 aa)) are cytoplasmic. The helical transmembrane segment at 82–102 (VNISILPPLVLLPVLLRVASW) threads the bilayer. Residue His103 is a topological domain, lumenal. Residues 104 to 124 (FLLGVVVLTSLPMLALWYYYL) form a helical membrane-spanning segment. Residues 125-130 (THRRKE) are Cytoplasmic-facing. The helical transmembrane segment at 131–151 (QTLFFLSLGLFSLGYMYYVFL) threads the bilayer. The Lumenal segment spans residues 152–159 (QEVVPQGH). A helical transmembrane segment spans residues 160–180 (VGPAQLALLTCGLFLILVALY). Over 181-296 (RAKKNPGYLS…NSCVGESNHQ (116 aa)) the chain is Cytoplasmic. A disordered region spans residues 212-247 (QEKTKGFPGTDTSGSLNNRTLKDDAKGSSRVGLDSP). Residues 221-230 (TDTSGSLNNR) show a composition bias toward polar residues. Residues 253–303 (DWCAKCQLVRPARAWHCRICGICVRRMDHHCVWINSCVGESNHQAFILALS) form the DHHC domain. Cys283 serves as the catalytic S-palmitoyl cysteine intermediate. Residues 297–317 (AFILALSIFLLTSVYGISLTL) form a helical membrane-spanning segment. Over 318–347 (NTICRDRSLFTALFYCPGVYANYSSALSFT) the chain is Lumenal. Residues 348–368 (CVWYSVIITAGMAYIFLIQLI) form a helical membrane-spanning segment. The Cytoplasmic segment spans residues 369–429 (NISYNVTERE…TVHTPAEDIV (61 aa)). The tract at residues 426–429 (EDIV) is interaction with NOS1.

Belongs to the DHHC palmitoyltransferase family. As to quaternary structure, interacts with NOS1. As to expression, expressed in the brain (at protein level), with highest levels in olfactory bulb, piriform cortex and hippocampus.

Its subcellular location is the golgi apparatus membrane. It is found in the golgi apparatus. It localises to the trans-Golgi network membrane. It carries out the reaction L-cysteinyl-[protein] + hexadecanoyl-CoA = S-hexadecanoyl-L-cysteinyl-[protein] + CoA. Palmitoyltransferase that could catalyze the addition of palmitate onto various protein substrates and be involved in a variety of cellular processes. Palmitoyltransferase that mediates palmitoylation of KCNMA1, regulating localization of KCNMA1 to the plasma membrane. May be involved in NOS1 regulation and targeting to the synaptic membrane. The chain is Palmitoyltransferase ZDHHC23 from Rattus norvegicus (Rat).